The primary structure comprises 96 residues: MLLQAFIFLLAGFAAKISALMTNETSDRPLVHFTPNKGWMNDPNGLWYDAKEGKWHLYFQYNPNDTVWGLPLFWVNMTTGVDNLFYIDKFQVREVK.

A signal peptide spans 1–19 (MLLQAFIFLLAGFAAKISA). A glycan (N-linked (GlcNAc...) asparagine) is linked at Asn-23. Substrate is bound by residues 39-42 (WMND) and Gln-60. Residue Asp-42 is part of the active site. Residues Asn-64 and Asn-76 are each glycosylated (N-linked (GlcNAc...) asparagine).

It belongs to the glycosyl hydrolase 32 family.

The enzyme catalyses Hydrolysis of terminal non-reducing beta-D-fructofuranoside residues in beta-D-fructofuranosides.. This chain is Invertase 7 (SUC7), found in Saccharomyces cerevisiae (Baker's yeast).